The primary structure comprises 229 residues: Cytochrome c oxidase subunit 2 (229 aa).

Residues 1–14 (MANPSQFGFQDASS) lie on the Mitochondrial intermembrane side of the membrane. Residues 15–45 (PIMEELVEFHDHALMVALAICSLVLYLLALM) traverse the membrane as a helical segment. Topologically, residues 46 to 58 (LVEKLSSNTVDAQ) are mitochondrial matrix. A helical membrane pass occupies residues 59–86 (EVELIWTILPAIVLILLALPSLQILYMM). The Mitochondrial intermembrane portion of the chain corresponds to 87-229 (DEIDEPDLTL…SWSSLLSTDS (143 aa)). Cu cation is bound by residues His160, Cys195, Glu197, Cys199, His203, and Met206. Residue Glu197 coordinates Mg(2+).

This sequence belongs to the cytochrome c oxidase subunit 2 family. In terms of assembly, component of the cytochrome c oxidase (complex IV, CIV), a multisubunit enzyme composed of 14 subunits. The complex is composed of a catalytic core of 3 subunits MT-CO1, MT-CO2 and MT-CO3, encoded in the mitochondrial DNA, and 11 supernumerary subunits COX4I, COX5A, COX5B, COX6A, COX6B, COX6C, COX7A, COX7B, COX7C, COX8 and NDUFA4, which are encoded in the nuclear genome. The complex exists as a monomer or a dimer and forms supercomplexes (SCs) in the inner mitochondrial membrane with NADH-ubiquinone oxidoreductase (complex I, CI) and ubiquinol-cytochrome c oxidoreductase (cytochrome b-c1 complex, complex III, CIII), resulting in different assemblies (supercomplex SCI(1)III(2)IV(1) and megacomplex MCI(2)III(2)IV(2)). Found in a complex with TMEM177, COA6, COX18, COX20, SCO1 and SCO2. Interacts with TMEM177 in a COX20-dependent manner. Interacts with COX20. Interacts with COX16. It depends on Cu cation as a cofactor.

It is found in the mitochondrion inner membrane. The catalysed reaction is 4 Fe(II)-[cytochrome c] + O2 + 8 H(+)(in) = 4 Fe(III)-[cytochrome c] + 2 H2O + 4 H(+)(out). Functionally, component of the cytochrome c oxidase, the last enzyme in the mitochondrial electron transport chain which drives oxidative phosphorylation. The respiratory chain contains 3 multisubunit complexes succinate dehydrogenase (complex II, CII), ubiquinol-cytochrome c oxidoreductase (cytochrome b-c1 complex, complex III, CIII) and cytochrome c oxidase (complex IV, CIV), that cooperate to transfer electrons derived from NADH and succinate to molecular oxygen, creating an electrochemical gradient over the inner membrane that drives transmembrane transport and the ATP synthase. Cytochrome c oxidase is the component of the respiratory chain that catalyzes the reduction of oxygen to water. Electrons originating from reduced cytochrome c in the intermembrane space (IMS) are transferred via the dinuclear copper A center (CU(A)) of subunit 2 and heme A of subunit 1 to the active site in subunit 1, a binuclear center (BNC) formed by heme A3 and copper B (CU(B)). The BNC reduces molecular oxygen to 2 water molecules using 4 electrons from cytochrome c in the IMS and 4 protons from the mitochondrial matrix. The polypeptide is Cytochrome c oxidase subunit 2 (MT-CO2) (Struthio camelus (Common ostrich)).